The following is a 71-amino-acid chain: Small ribosomal subunit protein bS21 (71 aa).

Over residues 50-59 the composition is skewed to basic residues; sequence AAAVKRHAKK. The segment at 50–71 is disordered; that stretch reads AAAVKRHAKKVQREQRRAVRLY. Basic and acidic residues predominate over residues 60-71; sequence VQREQRRAVRLY.

It belongs to the bacterial ribosomal protein bS21 family.

The protein is Small ribosomal subunit protein bS21 of Pseudomonas entomophila (strain L48).